Reading from the N-terminus, the 198-residue chain is HTH-type transcriptional regulator BetI (198 aa).

Residues 8–68 (PLRRRELIDA…ATMRHLLREL (61 aa)) enclose the HTH tetR-type domain. Positions 31–50 (TVAQIAHEAGVSPALAHHYF) form a DNA-binding region, H-T-H motif.

Its pathway is amine and polyamine biosynthesis; betaine biosynthesis via choline pathway [regulation]. Repressor involved in the biosynthesis of the osmoprotectant glycine betaine. It represses transcription of the choline transporter BetT and the genes of BetAB involved in the synthesis of glycine betaine. This chain is HTH-type transcriptional regulator BetI, found in Brucella suis biovar 1 (strain 1330).